Here is a 179-residue protein sequence, read N- to C-terminus: Large ribosomal subunit protein uL5 (179 aa).

This sequence belongs to the universal ribosomal protein uL5 family. Part of the 50S ribosomal subunit; part of the 5S rRNA/L5/L18/L25 subcomplex. Contacts the 5S rRNA and the P site tRNA. Forms a bridge to the 30S subunit in the 70S ribosome.

Its function is as follows. This is one of the proteins that bind and probably mediate the attachment of the 5S RNA into the large ribosomal subunit, where it forms part of the central protuberance. In the 70S ribosome it contacts protein S13 of the 30S subunit (bridge B1b), connecting the 2 subunits; this bridge is implicated in subunit movement. Contacts the P site tRNA; the 5S rRNA and some of its associated proteins might help stabilize positioning of ribosome-bound tRNAs. In Trichlorobacter lovleyi (strain ATCC BAA-1151 / DSM 17278 / SZ) (Geobacter lovleyi), this protein is Large ribosomal subunit protein uL5.